The following is a 154-amino-acid chain: Ribosome maturation factor RimP (154 aa).

This sequence belongs to the RimP family.

It is found in the cytoplasm. Its function is as follows. Required for maturation of 30S ribosomal subunits. This is Ribosome maturation factor RimP from Hydrogenobaculum sp. (strain Y04AAS1).